Consider the following 302-residue polypeptide: Hydrogen peroxide-inducible genes activator (302 aa).

The region spanning 1–58 is the HTH lysR-type domain; it reads MNIRDLEYLVALAEHRHFRRAADSCHVSQPTLSGQIRKLEDELGVMLLERTSRKVLFT. A DNA-binding region (H-T-H motif) is located at residues 18-37; the sequence is FRRAADSCHVSQPTLSGQIR.

This sequence belongs to the LysR transcriptional regulatory family.

In terms of biological role, required for the induction of a regulon of hydrogen peroxide inducible genes such as catalase and glutathione-reductase. The sequence is that of Hydrogen peroxide-inducible genes activator (oxyR) from Pectobacterium carotovorum subsp. carotovorum (Erwinia carotovora subsp. carotovora).